A 207-amino-acid chain; its full sequence is Large ribosomal subunit protein uL4 (207 aa).

This sequence belongs to the universal ribosomal protein uL4 family. In terms of assembly, part of the 50S ribosomal subunit.

In terms of biological role, one of the primary rRNA binding proteins, this protein initially binds near the 5'-end of the 23S rRNA. It is important during the early stages of 50S assembly. It makes multiple contacts with different domains of the 23S rRNA in the assembled 50S subunit and ribosome. Forms part of the polypeptide exit tunnel. The polypeptide is Large ribosomal subunit protein uL4 (Rickettsia conorii (strain ATCC VR-613 / Malish 7)).